Consider the following 444-residue polypeptide: 3-phosphoshikimate 1-carboxyvinyltransferase (444 aa).

The 3-phosphoshikimate site is built by lysine 29, serine 30, and arginine 34. A phosphoenolpyruvate-binding site is contributed by lysine 29. Phosphoenolpyruvate is bound by residues glycine 103 and arginine 132. Residues serine 177, glutamine 179, aspartate 329, and lysine 356 each contribute to the 3-phosphoshikimate site. Glutamine 179 contacts phosphoenolpyruvate. The active-site Proton acceptor is aspartate 329. Phosphoenolpyruvate-binding residues include arginine 360 and arginine 402.

It belongs to the EPSP synthase family. In terms of assembly, monomer.

The protein resides in the cytoplasm. The enzyme catalyses 3-phosphoshikimate + phosphoenolpyruvate = 5-O-(1-carboxyvinyl)-3-phosphoshikimate + phosphate. It participates in metabolic intermediate biosynthesis; chorismate biosynthesis; chorismate from D-erythrose 4-phosphate and phosphoenolpyruvate: step 6/7. Functionally, catalyzes the transfer of the enolpyruvyl moiety of phosphoenolpyruvate (PEP) to the 5-hydroxyl of shikimate-3-phosphate (S3P) to produce enolpyruvyl shikimate-3-phosphate and inorganic phosphate. The chain is 3-phosphoshikimate 1-carboxyvinyltransferase from Prochlorococcus marinus (strain NATL2A).